The sequence spans 87 residues: MSTSVPQGHTWTQRVKKDDEEEDPLDQLISRSGCAASHFAVQECMAQHQDWRQCQPQVQAFKDCMSEQQARRQEELQRRQEQAGAHH.

Residues 1–13 are compositionally biased toward polar residues; it reads MSTSVPQGHTWTQ. The tract at residues 1-25 is disordered; sequence MSTSVPQGHTWTQRVKKDDEEEDPL. The CHCH domain maps to 31–72; sequence RSGCAASHFAVQECMAQHQDWRQCQPQVQAFKDCMSEQQARR. Short sequence motifs (cx9C motif) lie at residues 34–44 and 54–64; these read CAASHFAVQEC and CQPQVQAFKDC. Intrachain disulfides connect cysteine 34–cysteine 64 and cysteine 44–cysteine 54. Positions 68-87 are disordered; sequence QQARRQEELQRRQEQAGAHH. Residues 69–81 show a composition bias toward basic and acidic residues; the sequence is QARRQEELQRRQE.

The protein belongs to the COA4 family.

It is found in the mitochondrion. Functionally, putative COX assembly factor. The protein is Cytochrome c oxidase assembly factor 4 homolog, mitochondrial (COA4) of Homo sapiens (Human).